The sequence spans 418 residues: Glutamyl-tRNA reductase (418 aa).

Residues 49 to 52 (TCNR), Ser109, 114 to 116 (EPQ), and Gln120 contribute to the substrate site. Cys50 (nucleophile) is an active-site residue. 189-194 (GAGETI) provides a ligand contact to NADP(+).

This sequence belongs to the glutamyl-tRNA reductase family. As to quaternary structure, homodimer.

The enzyme catalyses (S)-4-amino-5-oxopentanoate + tRNA(Glu) + NADP(+) = L-glutamyl-tRNA(Glu) + NADPH + H(+). It participates in porphyrin-containing compound metabolism; protoporphyrin-IX biosynthesis; 5-aminolevulinate from L-glutamyl-tRNA(Glu): step 1/2. In terms of biological role, catalyzes the NADPH-dependent reduction of glutamyl-tRNA(Glu) to glutamate 1-semialdehyde (GSA). This chain is Glutamyl-tRNA reductase, found in Escherichia fergusonii (strain ATCC 35469 / DSM 13698 / CCUG 18766 / IAM 14443 / JCM 21226 / LMG 7866 / NBRC 102419 / NCTC 12128 / CDC 0568-73).